The chain runs to 315 residues: Zinc finger protein 691 (315 aa).

The span at 1–10 (MSLCSPTHSA) shows a compositional bias: polar residues. Positions 1–90 (MSLCSPTHSA…QETHPKKPWQ (90 aa)) are disordered. The span at 33-58 (GSEKEQSPEPHLPEEGEGGKPWRVDD) shows a compositional bias: basic and acidic residues. S39, S75, and S77 each carry phosphoserine. A Glycyl lysine isopeptide (Lys-Gly) (interchain with G-Cter in SUMO2) cross-link involves residue K113. 7 C2H2-type zinc fingers span residues 115 to 137 (FICA…QRIH), 143 to 165 (YKCS…ERIH), 171 to 193 (YKCP…QQDH), 199 to 221 (YRCD…HRTH), 227 to 249 (YICC…HRTH), 255 to 277 (YECT…QRTH), and 283 to 305 (YRCT…QKTH).

This sequence belongs to the krueppel C2H2-type zinc-finger protein family.

The protein resides in the nucleus. Its function is as follows. May be involved in transcriptional regulation. The polypeptide is Zinc finger protein 691 (ZNF691) (Homo sapiens (Human)).